We begin with the raw amino-acid sequence, 482 residues long: NAD(+) hydrolase ThsA (482 aa).

Residues E3 to K281 form the Deacetylase sirtuin-type domain. NAD(+) contacts are provided by D112 and H150. H150 functions as the Proton acceptor in the catalytic mechanism. Residues N282–I482 are SLOG (STALD) domain. 8 residues coordinate 3'cADPR: G287, S288, L324, F355, R373, K390, G407, and E411.

Belongs to the soluble Thoeris ThsA family. Homotetramer in solution.

The catalysed reaction is NAD(+) + H2O = ADP-D-ribose + nicotinamide + H(+). Its activity is regulated as follows. In vivo probably activated by a cyclic ADP-D-ribose generated by ThsB (might be 3'cADPR). Its function is as follows. NAD(+) hydrolyzing component (NADase) of the Thoeris antiviral defense system, composed of ThsA and ThsB (maybe J591_1492). As purified, has NADase activity that is not activated by any tested cADPR isomers; binds 3'cADPR better than 2'cADPR. It was suggested the purified protein is already in a fully active state. Upon activation binds and hydrolyzes NAD(+), leading to cell death and inhibition of phage replication. This chain is NAD(+) hydrolase ThsA, found in Acinetobacter baumannii (strain 532279).